Here is a 205-residue protein sequence, read N- to C-terminus: Proteasome subunit beta (205 aa).

Residues 1 to 9 (MNQTENMEG) constitute a propeptide, removed in mature form; by autocatalysis. Catalysis depends on Thr10, which acts as the Nucleophile.

It belongs to the peptidase T1B family. The 20S proteasome core is composed of 14 alpha and 14 beta subunits that assemble into four stacked heptameric rings, resulting in a barrel-shaped structure. The two inner rings, each composed of seven catalytic beta subunits, are sandwiched by two outer rings, each composed of seven alpha subunits. The catalytic chamber with the active sites is on the inside of the barrel. Has a gated structure, the ends of the cylinder being occluded by the N-termini of the alpha-subunits. Is capped at one or both ends by the proteasome regulatory ATPase, PAN.

The protein localises to the cytoplasm. The catalysed reaction is Cleavage of peptide bonds with very broad specificity.. Its activity is regulated as follows. The formation of the proteasomal ATPase PAN-20S proteasome complex, via the docking of the C-termini of PAN into the intersubunit pockets in the alpha-rings, triggers opening of the gate for substrate entry. Interconversion between the open-gate and close-gate conformations leads to a dynamic regulation of the 20S proteasome proteolysis activity. Functionally, component of the proteasome core, a large protease complex with broad specificity involved in protein degradation. The protein is Proteasome subunit beta of Methanosphaera stadtmanae (strain ATCC 43021 / DSM 3091 / JCM 11832 / MCB-3).